We begin with the raw amino-acid sequence, 219 residues long: Peptide methionine sulfoxide reductase MsrA (219 aa).

The disordered stretch occupies residues 1-20; it reads MGLFRSPRQNLPTAADALPG. Cys55 is an active-site residue.

This sequence belongs to the MsrA Met sulfoxide reductase family.

It carries out the reaction L-methionyl-[protein] + [thioredoxin]-disulfide + H2O = L-methionyl-(S)-S-oxide-[protein] + [thioredoxin]-dithiol. The enzyme catalyses [thioredoxin]-disulfide + L-methionine + H2O = L-methionine (S)-S-oxide + [thioredoxin]-dithiol. In terms of biological role, has an important function as a repair enzyme for proteins that have been inactivated by oxidation. Catalyzes the reversible oxidation-reduction of methionine sulfoxide in proteins to methionine. The sequence is that of Peptide methionine sulfoxide reductase MsrA from Rhodospirillum centenum (strain ATCC 51521 / SW).